The chain runs to 364 residues: S-adenosylmethionine:tRNA ribosyltransferase-isomerase (364 aa).

It belongs to the QueA family. Monomer.

The protein resides in the cytoplasm. The enzyme catalyses 7-aminomethyl-7-carbaguanosine(34) in tRNA + S-adenosyl-L-methionine = epoxyqueuosine(34) in tRNA + adenine + L-methionine + 2 H(+). Its pathway is tRNA modification; tRNA-queuosine biosynthesis. Transfers and isomerizes the ribose moiety from AdoMet to the 7-aminomethyl group of 7-deazaguanine (preQ1-tRNA) to give epoxyqueuosine (oQ-tRNA). The sequence is that of S-adenosylmethionine:tRNA ribosyltransferase-isomerase from Lachnoclostridium phytofermentans (strain ATCC 700394 / DSM 18823 / ISDg) (Clostridium phytofermentans).